We begin with the raw amino-acid sequence, 190 residues long: Protein GrpE (190 aa).

A disordered region spans residues 1 to 42; sequence MNEKDNQTTSEPENEQEIIDVNDSGEQPEENETEQPQEEAVE. Acidic residues predominate over residues 26-42; sequence EQPEENETEQPQEEAVE.

It belongs to the GrpE family. In terms of assembly, homodimer.

The protein localises to the cytoplasm. Its function is as follows. Participates actively in the response to hyperosmotic and heat shock by preventing the aggregation of stress-denatured proteins, in association with DnaK and GrpE. It is the nucleotide exchange factor for DnaK and may function as a thermosensor. Unfolded proteins bind initially to DnaJ; upon interaction with the DnaJ-bound protein, DnaK hydrolyzes its bound ATP, resulting in the formation of a stable complex. GrpE releases ADP from DnaK; ATP binding to DnaK triggers the release of the substrate protein, thus completing the reaction cycle. Several rounds of ATP-dependent interactions between DnaJ, DnaK and GrpE are required for fully efficient folding. The protein is Protein GrpE of Oceanobacillus iheyensis (strain DSM 14371 / CIP 107618 / JCM 11309 / KCTC 3954 / HTE831).